A 300-amino-acid chain; its full sequence is Junctional adhesion molecule A (300 aa).

An N-terminal signal peptide occupies residues 1-26 (MGTEGKAGRKLLFLFTSMILGSLVQG). Residues 27–238 (KGSVYTAQSD…MDAVELNVGG (212 aa)) lie on the Extracellular side of the membrane. 2 Ig-like V-type domains span residues 28–122 (GSVY…GEVS) and 134–230 (PTIS…AHMD). The N-linked (GlcNAc...) asparagine glycan is linked to N42. 2 disulfides stabilise this stretch: C49–C108 and C152–C212. N185 carries an N-linked (GlcNAc...) asparagine glycan. A helical membrane pass occupies residues 239–259 (IVAAVLVTLILLGLLIFGVWF). Residues 260-299 (AYSRGYFERTKKGTAPGKKVIYSQPSTRSEGEFKQTSSFL) are Cytoplasmic-facing. S282, S285, and S288 each carry phosphoserine.

This sequence belongs to the immunoglobulin superfamily. In terms of assembly, interacts with the ninth PDZ domain of MPDZ. Interacts with the first PDZ domain of PARD3. The association between PARD3 and PARD6B probably disrupts this interaction. Interacts with ITGAL (via I-domain). Interacts with CD151.

The protein resides in the cell junction. It localises to the tight junction. The protein localises to the cell membrane. Seems to play a role in epithelial tight junction formation. Appears early in primordial forms of cell junctions and recruits PARD3. The association of the PARD6-PARD3 complex may prevent the interaction of PARD3 with JAM1, thereby preventing tight junction assembly. Plays a role in regulating monocyte transmigration involved in integrity of epithelial barrier. Ligand for integrin alpha-L/beta-2 involved in memory T-cell and neutrophil transmigration. Involved in platelet activation. The chain is Junctional adhesion molecule A (F11r) from Mus musculus (Mouse).